The chain runs to 114 residues: Ribonuclease P protein component (114 aa).

Belongs to the RnpA family. Consists of a catalytic RNA component (M1 or rnpB) and a protein subunit.

It carries out the reaction Endonucleolytic cleavage of RNA, removing 5'-extranucleotides from tRNA precursor.. RNaseP catalyzes the removal of the 5'-leader sequence from pre-tRNA to produce the mature 5'-terminus. It can also cleave other RNA substrates such as 4.5S RNA. The protein component plays an auxiliary but essential role in vivo by binding to the 5'-leader sequence and broadening the substrate specificity of the ribozyme. This chain is Ribonuclease P protein component, found in Borrelia turicatae (strain 91E135).